Here is a 121-residue protein sequence, read N- to C-terminus: Fluoride-specific ion channel FluC 2 (121 aa).

4 consecutive transmembrane segments (helical) span residues tyrosine 3 to isoleucine 23, isoleucine 31 to alanine 51, glycine 64 to valine 84, and phenylalanine 92 to leucine 112. Positions 71 and 74 each coordinate Na(+).

It belongs to the fluoride channel Fluc/FEX (TC 1.A.43) family.

Its subcellular location is the cell membrane. The enzyme catalyses fluoride(in) = fluoride(out). With respect to regulation, na(+) is not transported, but it plays an essential structural role and its presence is essential for fluoride channel function. In terms of biological role, fluoride-specific ion channel. Important for reducing fluoride concentration in the cell, thus reducing its toxicity. The polypeptide is Fluoride-specific ion channel FluC 2 (Staphylococcus saprophyticus subsp. saprophyticus (strain ATCC 15305 / DSM 20229 / NCIMB 8711 / NCTC 7292 / S-41)).